We begin with the raw amino-acid sequence, 321 residues long: Probable arabinan endo-1,5-alpha-L-arabinosidase A (321 aa).

An N-terminal signal peptide occupies residues 1-19 (MSASAFVAVASCLAALVHG). The active-site Proton acceptor is aspartate 34. Catalysis depends on glutamate 200, which acts as the Proton donor.

Belongs to the glycosyl hydrolase 43 family.

The protein localises to the secreted. It catalyses the reaction Endohydrolysis of (1-&gt;5)-alpha-arabinofuranosidic linkages in (1-&gt;5)-arabinans.. Its pathway is glycan metabolism; L-arabinan degradation. Functionally, endo-1,5-alpha-L-arabinanase involved in degradation of pectin. Its preferred substrate is linear 1,5-alpha-L-arabinan. The sequence is that of Probable arabinan endo-1,5-alpha-L-arabinosidase A (abnA) from Neosartorya fischeri (strain ATCC 1020 / DSM 3700 / CBS 544.65 / FGSC A1164 / JCM 1740 / NRRL 181 / WB 181) (Aspergillus fischerianus).